A 144-amino-acid polypeptide reads, in one-letter code: Cell division protein SepF (144 aa).

The protein belongs to the SepF family. As to quaternary structure, homodimer. Interacts with FtsZ.

It is found in the cytoplasm. In terms of biological role, cell division protein that is part of the divisome complex and is recruited early to the Z-ring. Probably stimulates Z-ring formation, perhaps through the cross-linking of FtsZ protofilaments. Its function overlaps with FtsA. The sequence is that of Cell division protein SepF from Oceanobacillus iheyensis (strain DSM 14371 / CIP 107618 / JCM 11309 / KCTC 3954 / HTE831).